A 293-amino-acid chain; its full sequence is Group 3 late-embryogenesis abundant protein, mitochondrial (293 aa).

Residues 1 to 31 constitute a mitochondrion transit peptide; that stretch reads MFLARNAGRAGYRGVVAYQQAASFSVSSAKA. Residues 27–43 show a composition bias toward low complexity; the sequence is SSAKAAGSRSSGGSDAG. Residues 27-52 are disordered; sequence SSAKAAGSRSSGGSDAGDYAREAAEH. LEA 11-mer repeat repeat units follow at residues 58–68, 83–93, 123–133, 134–144, 145–155, 160–170, 171–181, 199–209, and 210–220; these read KDLKNEASWKA, KDTVKEGVHDM, KNAAQDTAATL, KDKAGSAWNQA, KHVVEDKGEDV, KDTASKVWGKA, KHVAEDVKENA, KDKAADVLSGA, and KHTAENLAHKA. Residues 217–293 are disordered; it reads AHKAQAAIHD…KGPGQAGGRR (77 aa). The segment covering 230–265 has biased composition (low complexity); it reads SSGSQSQSQSQSQYRQGQQQGRQDQQQSKSQWGQTS. Gly residues predominate over residues 279-293; it reads GPQGGKGPGQAGGRR.

It belongs to the LEA type 4 family.

The protein resides in the mitochondrion. Functionally, mitochondrial heat soluble protein acting as a molecular shield in water-deficient condition. This chain is Group 3 late-embryogenesis abundant protein, mitochondrial, found in Ramazzottius varieornatus (Water bear).